A 761-amino-acid chain; its full sequence is Phosphoribosylformylglycinamidine synthase subunit PurL (761 aa).

The active site involves His58. Tyr61 and Lys105 together coordinate ATP. Glu107 is a Mg(2+) binding site. Residues 108 to 111 and Arg130 contribute to the substrate site; that span reads SHNH. Residue His109 is the Proton acceptor of the active site. Asp131 is a binding site for Mg(2+). Residue Gln259 participates in substrate binding. Residue Asp287 coordinates Mg(2+). 331–333 lines the substrate pocket; it reads ESQ. ATP is bound by residues Asn519 and Gly556. Asn557 lines the Mg(2+) pocket. Residue Ser559 participates in substrate binding.

Belongs to the FGAMS family. As to quaternary structure, monomer. Part of the FGAM synthase complex composed of 1 PurL, 1 PurQ and 2 PurS subunits.

The protein localises to the cytoplasm. It catalyses the reaction N(2)-formyl-N(1)-(5-phospho-beta-D-ribosyl)glycinamide + L-glutamine + ATP + H2O = 2-formamido-N(1)-(5-O-phospho-beta-D-ribosyl)acetamidine + L-glutamate + ADP + phosphate + H(+). It participates in purine metabolism; IMP biosynthesis via de novo pathway; 5-amino-1-(5-phospho-D-ribosyl)imidazole from N(2)-formyl-N(1)-(5-phospho-D-ribosyl)glycinamide: step 1/2. Functionally, part of the phosphoribosylformylglycinamidine synthase complex involved in the purines biosynthetic pathway. Catalyzes the ATP-dependent conversion of formylglycinamide ribonucleotide (FGAR) and glutamine to yield formylglycinamidine ribonucleotide (FGAM) and glutamate. The FGAM synthase complex is composed of three subunits. PurQ produces an ammonia molecule by converting glutamine to glutamate. PurL transfers the ammonia molecule to FGAR to form FGAM in an ATP-dependent manner. PurS interacts with PurQ and PurL and is thought to assist in the transfer of the ammonia molecule from PurQ to PurL. The sequence is that of Phosphoribosylformylglycinamidine synthase subunit PurL from Rhodococcus opacus (strain B4).